The chain runs to 642 residues: Wall-associated receptor kinase-like 6 (642 aa).

Positions 1–28 (MKKTKTYQVFCIAALSVLTLQLINGSSA) are cleaved as a signal peptide. The Extracellular portion of the chain corresponds to 29 to 357 (ATPPPPNSNS…PKITKPEKAS (329 aa)). N-linked (GlcNAc...) asparagine glycosylation is found at asparagine 37, asparagine 72, asparagine 95, asparagine 137, asparagine 216, asparagine 240, and asparagine 276. Residues 289-346 (CSCEYDYFSGMSYRICYCNYGYTGNPYLRHGCIDIDECEGHHNCGEGTCVNMPGTHSC) form an atypical EGF-like region. 3 cysteine pairs are disulfide-bonded: cysteine 291–cysteine 304, cysteine 326–cysteine 337, and cysteine 332–cysteine 346. Residues 358-378 (VLQGVLISLGVLLFVLGILGL) form a helical membrane-spanning segment. Over 379–642 (YKFIKKRTRI…KPLSRKRIGN (264 aa)) the chain is Cytoplasmic. In terms of domain architecture, Protein kinase spans 432-642 (FSMNRVLGQG…KPLSRKRIGN (211 aa)). Residues 438 to 446 (LGQGGQGTV) and lysine 460 contribute to the ATP site. At tyrosine 505 the chain carries Phosphotyrosine. Aspartate 559 acts as the Proton acceptor in catalysis. A phosphothreonine mark is found at threonine 593 and threonine 598. Tyrosine 606 is modified (phosphotyrosine).

This sequence belongs to the protein kinase superfamily. Ser/Thr protein kinase family. As to expression, slightly expressed in the whole plant.

The protein resides in the membrane. It carries out the reaction L-seryl-[protein] + ATP = O-phospho-L-seryl-[protein] + ADP + H(+). It catalyses the reaction L-threonyl-[protein] + ATP = O-phospho-L-threonyl-[protein] + ADP + H(+). In terms of biological role, serine/threonine-protein kinase that may function as a signaling receptor of extracellular matrix component. This Arabidopsis thaliana (Mouse-ear cress) protein is Wall-associated receptor kinase-like 6 (WAKL6).